We begin with the raw amino-acid sequence, 526 residues long: Catalase (526 aa).

Basic and acidic residues predominate over residues 1-22 (MADDREKSTDQMKLWKEGRGSQ). A disordered region spans residues 1–29 (MADDREKSTDQMKLWKEGRGSQRPDVLTT). Catalysis depends on residues histidine 75 and asparagine 148. Residues histidine 194, serine 201, arginine 203, asparagine 213, lysine 237, tryptophan 303, histidine 305, and lysine 306 each contribute to the NADP(+) site. Tyrosine 358 is a heme binding site.

Belongs to the catalase family. In terms of assembly, homotetramer. Requires heme as cofactor. It depends on NADP(+) as a cofactor.

The protein localises to the peroxisome matrix. The enzyme catalyses 2 H2O2 = O2 + 2 H2O. In terms of biological role, catalyzes the degradation of hydrogen peroxide (H(2)O(2)) generated by peroxisomal oxidases to water and oxygen, thereby protecting cells from the toxic effects of hydrogen peroxide. This chain is Catalase (cat), found in Danio rerio (Zebrafish).